Reading from the N-terminus, the 340-residue chain is Heat-inducible transcription repressor HrcA (340 aa).

It belongs to the HrcA family.

Negative regulator of class I heat shock genes (grpE-dnaK-dnaJ and groELS operons). Prevents heat-shock induction of these operons. In Burkholderia cenocepacia (strain HI2424), this protein is Heat-inducible transcription repressor HrcA.